A 189-amino-acid polypeptide reads, in one-letter code: MRNVILIGFMGTGKSAVGWRLARILDRPFLDTDSEIERLAGKPVRRIFIEDGEVRFRSEEALLCRKLAVPRGLVVATGGGVVLNPENVANLRAGGVLIGLSADPEVIYQRVRRKKSRPLLRGNVRARIRELLEERAGAYDVAEFTVDTGMHSLPKTVGLIMEFLKERGYLEAGSDSESGGVPELPDISR.

11 to 16 (GTGKSA) contacts ATP. Ser-15 is a binding site for Mg(2+). Residues Asp-33, Arg-57, and Gly-79 each contribute to the substrate site. ATP is bound at residue Arg-117. Arg-135 serves as a coordination point for substrate.

The protein belongs to the shikimate kinase family. As to quaternary structure, monomer. Requires Mg(2+) as cofactor.

It is found in the cytoplasm. The enzyme catalyses shikimate + ATP = 3-phosphoshikimate + ADP + H(+). It functions in the pathway metabolic intermediate biosynthesis; chorismate biosynthesis; chorismate from D-erythrose 4-phosphate and phosphoenolpyruvate: step 5/7. Its function is as follows. Catalyzes the specific phosphorylation of the 3-hydroxyl group of shikimic acid using ATP as a cosubstrate. The sequence is that of Shikimate kinase from Desulforudis audaxviator (strain MP104C).